The sequence spans 759 residues: Subtilisin-like serine-protease S (759 aa).

The first 22 residues, 1–22 (MGSAKILSFTLLLFVGYTLVHG), serve as a signal peptide directing secretion. Residues 28–105 (YIVYMGDRSH…SVFESKMNKL (78 aa)) form the Inhibitor I9 domain. The Peptidase S8 domain occupies 110–613 (SWDFLGLDTV…SGHVNPVASL (504 aa)). The Charge relay system role is filled by D139. N170 carries N-linked (GlcNAc...) asparagine glycosylation. Residue H215 is the Charge relay system of the active site. N-linked (GlcNAc...) asparagine glycosylation is found at N230 and N388. The PA domain maps to 390–462 (SFCKEHTLDP…MIGQDAVEEL (73 aa)). S545 acts as the Charge relay system in catalysis. Residues N593, N642, and N671 are each glycosylated (N-linked (GlcNAc...) asparagine).

Belongs to the peptidase S8 family.

The protein localises to the secreted. It is found in the extracellular space. The protein resides in the apoplast. Functionally, required for arbuscular mycorrhiza (AM) development during AM symbiosis with AM fungi (e.g. Glomeromycota intraradices). This is Subtilisin-like serine-protease S from Lotus japonicus (Lotus corniculatus var. japonicus).